The primary structure comprises 395 residues: Acetate kinase (395 aa).

Asn-7 is a binding site for Mg(2+). Lys-14 is an ATP binding site. A substrate-binding site is contributed by Arg-90. Catalysis depends on Asp-147, which acts as the Proton donor/acceptor. Residues 207 to 211, 282 to 284, and 330 to 334 contribute to the ATP site; these read HLGNG, DFR, and GLGEN. Mg(2+) is bound at residue Glu-383.

It belongs to the acetokinase family. In terms of assembly, homodimer. Mg(2+) is required as a cofactor. The cofactor is Mn(2+).

It is found in the cytoplasm. It catalyses the reaction acetate + ATP = acetyl phosphate + ADP. It functions in the pathway metabolic intermediate biosynthesis; acetyl-CoA biosynthesis; acetyl-CoA from acetate: step 1/2. Catalyzes the formation of acetyl phosphate from acetate and ATP. Can also catalyze the reverse reaction. The protein is Acetate kinase of Lachnoclostridium phytofermentans (strain ATCC 700394 / DSM 18823 / ISDg) (Clostridium phytofermentans).